The following is a 95-amino-acid chain: Small ribosomal subunit protein bS6 (95 aa).

The protein belongs to the bacterial ribosomal protein bS6 family.

Functionally, binds together with bS18 to 16S ribosomal RNA. The sequence is that of Small ribosomal subunit protein bS6 from Aster yellows witches'-broom phytoplasma (strain AYWB).